We begin with the raw amino-acid sequence, 170 residues long: UPF0260 protein RPB_3505 (170 aa).

It belongs to the UPF0260 family.

The polypeptide is UPF0260 protein RPB_3505 (Rhodopseudomonas palustris (strain HaA2)).